Reading from the N-terminus, the 366-residue chain is 3-isopropylmalate dehydrogenase (366 aa).

Residue 78–91 (GPQWTHLKGSESPE) coordinates NAD(+). Positions 99, 109, 138, and 227 each coordinate substrate. The Mg(2+) site is built by Asp-227, Asp-251, and Asp-255. 285-297 (GSAPDIAEKNIAN) serves as a coordination point for NAD(+).

The protein belongs to the isocitrate and isopropylmalate dehydrogenases family. LeuB type 1 subfamily. As to quaternary structure, homodimer. The cofactor is Mg(2+). It depends on Mn(2+) as a cofactor.

The protein localises to the cytoplasm. The catalysed reaction is (2R,3S)-3-isopropylmalate + NAD(+) = 4-methyl-2-oxopentanoate + CO2 + NADH. The protein operates within amino-acid biosynthesis; L-leucine biosynthesis; L-leucine from 3-methyl-2-oxobutanoate: step 3/4. Functionally, catalyzes the oxidation of 3-carboxy-2-hydroxy-4-methylpentanoate (3-isopropylmalate) to 3-carboxy-4-methyl-2-oxopentanoate. The product decarboxylates to 4-methyl-2 oxopentanoate. The sequence is that of 3-isopropylmalate dehydrogenase from Blochmanniella pennsylvanica (strain BPEN).